Consider the following 145-residue polypeptide: D-aminoacyl-tRNA deacylase (145 aa).

A Gly-cisPro motif, important for rejection of L-amino acids motif is present at residues glycine 137–proline 138.

The protein belongs to the DTD family. Homodimer.

The protein resides in the cytoplasm. The catalysed reaction is glycyl-tRNA(Ala) + H2O = tRNA(Ala) + glycine + H(+). The enzyme catalyses a D-aminoacyl-tRNA + H2O = a tRNA + a D-alpha-amino acid + H(+). An aminoacyl-tRNA editing enzyme that deacylates mischarged D-aminoacyl-tRNAs. Also deacylates mischarged glycyl-tRNA(Ala), protecting cells against glycine mischarging by AlaRS. Acts via tRNA-based rather than protein-based catalysis; rejects L-amino acids rather than detecting D-amino acids in the active site. By recycling D-aminoacyl-tRNA to D-amino acids and free tRNA molecules, this enzyme counteracts the toxicity associated with the formation of D-aminoacyl-tRNA entities in vivo and helps enforce protein L-homochirality. The polypeptide is D-aminoacyl-tRNA deacylase (Shewanella sediminis (strain HAW-EB3)).